An 808-amino-acid chain; its full sequence is Probable E3 ubiquitin-protein ligase hulA (808 aa).

The 112-residue stretch at 1–112 folds into the C2 domain; sequence MGSNLPAQPN…QMGGDEMLTR (112 aa). Disordered stretches follow at residues 134–231 and 275–346; these read NLST…GWER and RRAH…YFVD. Composition is skewed to polar residues over residues 142–159 and 171–198; these read QANG…SSGL and GPSQ…PSST. The segment covering 199–210 has biased composition (low complexity); the sequence is VAPVNGAAAPGA. Residues 211 to 220 show a composition bias toward polar residues; the sequence is SRTNLSSFED. The 34-residue stretch at 223–256 folds into the WW 1 domain; the sequence is GRLPAGWERREDNLGRTYYVDHNTRTTTWTRPSS. Over residues 275–288 the composition is skewed to basic and acidic residues; it reads RRAHQSRMLPEDRT. Positions 289–303 are enriched in polar residues; sequence GASSPNLQENQQAQT. Positions 317-326 are enriched in low complexity; sequence ATGATTAGTG. WW domains follow at residues 326–359 and 386–419; these read GELP…DPRR and GPLP…DPRL. Positions 475–808 constitute an HECT domain; sequence SASDLKKRLM…VEETLGFGQE (334 aa). Cys-776 functions as the Glycyl thioester intermediate in the catalytic mechanism.

Belongs to the RSP5/NEDD4 family. Interacts with creD.

Its subcellular location is the cytoplasm. The enzyme catalyses S-ubiquitinyl-[E2 ubiquitin-conjugating enzyme]-L-cysteine + [acceptor protein]-L-lysine = [E2 ubiquitin-conjugating enzyme]-L-cysteine + N(6)-ubiquitinyl-[acceptor protein]-L-lysine.. It participates in protein modification; protein ubiquitination. Functionally, E3 ubiquitin-protein ligase which accepts ubiquitin from an E2 ubiquitin-conjugating enzyme in the form of a thioester and then directly transfers the ubiquitin to targeted substrates. Probably involved in the regulatory network controlling carbon source utilization. This Aspergillus terreus (strain NIH 2624 / FGSC A1156) protein is Probable E3 ubiquitin-protein ligase hulA (hulA).